The chain runs to 410 residues: Translation initiation factor 2 subunit gamma (410 aa).

Residues 6–203 form the tr-type G domain; it reads QSEINIGMVG…AIEDLMPTPE (198 aa). Positions 15-22 are G1; it reads GHVDHGKT. Residues aspartate 18, threonine 22, glycine 43, and serine 45 each coordinate Mg(2+). 18–23 lines the GTP pocket; that stretch reads DHGKTS. The interval 43-47 is G2; the sequence is GISIR. Zn(2+) contacts are provided by cysteine 58, cysteine 61, cysteine 73, and cysteine 76. The interval 90 to 93 is G3; sequence DAPG. Residues 146 to 149 and 181 to 183 contribute to the GTP site; these read NKID and SAH. Positions 146 to 149 are G4; that stretch reads NKID. The G5 stretch occupies residues 181 to 183; that stretch reads SAH.

The protein belongs to the TRAFAC class translation factor GTPase superfamily. Classic translation factor GTPase family. EIF2G subfamily. In terms of assembly, heterotrimer composed of an alpha, a beta and a gamma chain. The cofactor is Mg(2+).

It catalyses the reaction GTP + H2O = GDP + phosphate + H(+). Functionally, eIF-2 functions in the early steps of protein synthesis by forming a ternary complex with GTP and initiator tRNA. In Methanococcus aeolicus (strain ATCC BAA-1280 / DSM 17508 / OCM 812 / Nankai-3), this protein is Translation initiation factor 2 subunit gamma.